A 500-amino-acid polypeptide reads, in one-letter code: 4-aminobutyrate aminotransferase, mitochondrial (500 aa).

The N-terminal 28 residues, 1–28 (MASMLLAQRLACSFQHSYRLLVPGSRHI), are a transit peptide targeting the mitochondrion. Residue Cys-163 coordinates [2Fe-2S] cluster. 164-165 (GS) lines the pyridoxal 5'-phosphate pocket. Residue Cys-166 participates in [2Fe-2S] cluster binding. Arg-220 lines the substrate pocket. N6-succinyllysine is present on Lys-231. Residue Lys-252 is modified to N6-acetyllysine; alternate. Lys-252 is subject to N6-succinyllysine; alternate. N6-acetyllysine occurs at positions 279 and 318. An N6-(pyridoxal phosphate)lysine modification is found at Lys-357. Thr-381 is a binding site for pyridoxal 5'-phosphate. An N6-acetyllysine; alternate modification is found at Lys-413. Position 413 is an N6-succinyllysine; alternate (Lys-413). An N6-acetyllysine mark is found at Lys-452 and Lys-470.

Belongs to the class-III pyridoxal-phosphate-dependent aminotransferase family. Homodimer; disulfide-linked. Pyridoxal 5'-phosphate serves as cofactor. Requires [2Fe-2S] cluster as cofactor. As to expression, liver &gt; pancreas &gt; brain &gt; kidney &gt; heart &gt; placenta.

It is found in the mitochondrion matrix. The catalysed reaction is 4-aminobutanoate + 2-oxoglutarate = succinate semialdehyde + L-glutamate. It carries out the reaction (S)-3-amino-2-methylpropanoate + 2-oxoglutarate = 2-methyl-3-oxopropanoate + L-glutamate. Its function is as follows. Catalyzes the conversion of gamma-aminobutyrate and L-beta-aminoisobutyrate to succinate semialdehyde and methylmalonate semialdehyde, respectively. Can also convert delta-aminovalerate and beta-alanine. In Homo sapiens (Human), this protein is 4-aminobutyrate aminotransferase, mitochondrial.